Here is a 316-residue protein sequence, read N- to C-terminus: Adenine deaminase (316 aa).

3 residues coordinate Zn(2+): histidine 14, histidine 16, and histidine 194. Glutamate 197 (proton donor) is an active-site residue. Aspartate 275 is a binding site for Zn(2+). Residue aspartate 276 coordinates substrate.

The protein belongs to the metallo-dependent hydrolases superfamily. Adenosine and AMP deaminases family. Adenine deaminase type 2 subfamily. It depends on Zn(2+) as a cofactor.

It carries out the reaction adenine + H2O + H(+) = hypoxanthine + NH4(+). Functionally, catalyzes the hydrolytic deamination of adenine to hypoxanthine. Plays an important role in the purine salvage pathway and in nitrogen catabolism. This is Adenine deaminase from Pseudomonas aeruginosa (strain LESB58).